The sequence spans 483 residues: Protein nucleotidyltransferase YdiU (483 aa).

ATP is bound by residues Gly87, Gly89, Arg90, Lys110, Asp122, Gly123, Arg173, and Arg180. Catalysis depends on Asp249, which acts as the Proton acceptor. The Mg(2+) site is built by Asn250 and Asp259. Asp259 lines the ATP pocket.

The protein belongs to the SELO family. Requires Mg(2+) as cofactor. It depends on Mn(2+) as a cofactor.

It carries out the reaction L-seryl-[protein] + ATP = 3-O-(5'-adenylyl)-L-seryl-[protein] + diphosphate. It catalyses the reaction L-threonyl-[protein] + ATP = 3-O-(5'-adenylyl)-L-threonyl-[protein] + diphosphate. The catalysed reaction is L-tyrosyl-[protein] + ATP = O-(5'-adenylyl)-L-tyrosyl-[protein] + diphosphate. The enzyme catalyses L-histidyl-[protein] + UTP = N(tele)-(5'-uridylyl)-L-histidyl-[protein] + diphosphate. It carries out the reaction L-seryl-[protein] + UTP = O-(5'-uridylyl)-L-seryl-[protein] + diphosphate. It catalyses the reaction L-tyrosyl-[protein] + UTP = O-(5'-uridylyl)-L-tyrosyl-[protein] + diphosphate. In terms of biological role, nucleotidyltransferase involved in the post-translational modification of proteins. It can catalyze the addition of adenosine monophosphate (AMP) or uridine monophosphate (UMP) to a protein, resulting in modifications known as AMPylation and UMPylation. This chain is Protein nucleotidyltransferase YdiU, found in Pelagibacter ubique (strain HTCC1062).